We begin with the raw amino-acid sequence, 174 residues long: UPF0340 protein MW2038 (174 aa).

The protein belongs to the UPF0340 family.

The chain is UPF0340 protein MW2038 from Staphylococcus aureus (strain MW2).